Here is a 145-residue protein sequence, read N- to C-terminus: ATP synthase epsilon chain (145 aa).

Residues 93–104 (AEAEKARARAQE) are compositionally biased toward basic and acidic residues. Residues 93–113 (AEAEKARARAQEALKNPDASK) form a disordered region.

Belongs to the ATPase epsilon chain family. F-type ATPases have 2 components, CF(1) - the catalytic core - and CF(0) - the membrane proton channel. CF(1) has five subunits: alpha(3), beta(3), gamma(1), delta(1), epsilon(1). CF(0) has three main subunits: a, b and c.

The protein localises to the cell inner membrane. Its function is as follows. Produces ATP from ADP in the presence of a proton gradient across the membrane. This Francisella philomiragia subsp. philomiragia (strain ATCC 25017 / CCUG 19701 / FSC 153 / O#319-036) protein is ATP synthase epsilon chain.